A 342-amino-acid polypeptide reads, in one-letter code: Tetraacyldisaccharide 4'-kinase (342 aa).

Position 68 to 75 (68 to 75 (TVGGTGKT)) interacts with ATP.

Belongs to the LpxK family.

It catalyses the reaction a lipid A disaccharide + ATP = a lipid IVA + ADP + H(+). Its pathway is glycolipid biosynthesis; lipid IV(A) biosynthesis; lipid IV(A) from (3R)-3-hydroxytetradecanoyl-[acyl-carrier-protein] and UDP-N-acetyl-alpha-D-glucosamine: step 6/6. Its function is as follows. Transfers the gamma-phosphate of ATP to the 4'-position of a tetraacyldisaccharide 1-phosphate intermediate (termed DS-1-P) to form tetraacyldisaccharide 1,4'-bis-phosphate (lipid IVA). This chain is Tetraacyldisaccharide 4'-kinase, found in Burkholderia multivorans (strain ATCC 17616 / 249).